The sequence spans 230 residues: MMPKHCLLGLLIILLSSATEIQPARVSLTPQKVRFQSRNFHNILHWQAGSSLPSNNSIYFVQYKMYGQSQWEDKVDCWGTTALFCDLTNETLDPYELYYGRVMTACAGRHSAWTRTPRFTPWWETKLDPPVVTITRVNASLRVLLRPPELPNRNQSGKNASMETYYGLVYRVFTINNSLEKEQKAYEGTQRAVEIEGLIPHSSYCVVAEMYQPMFDRRSPRSKERCVHIP.

The N-terminal stretch at 1-20 (MMPKHCLLGLLIILLSSATE) is a signal peptide. Fibronectin type-III domains are found at residues 29-128 (TPQK…TKLD) and 129-230 (PPVV…VHIP). Cystine bridges form between cysteine 77/cysteine 85 and cysteine 205/cysteine 226.

This sequence belongs to the type II cytokine receptor family. In terms of tissue distribution, highly expressed in lymph nodes and at lower levels in lung, spleen, and thymus. Not expressed in kidney, liver and heart.

It localises to the secreted. Its function is as follows. Receptor for IL22. Binds to IL22, prevents interaction with the functional IL-22R complex and blocks the activity of IL22 (in vitro). May play an important role as an IL22 antagonist in the regulation of inflammatory responses. This is Interleukin-22 receptor subunit alpha-2 (Il22ra2) from Mus musculus (Mouse).